Consider the following 482-residue polypeptide: tRNA sulfurtransferase (482 aa).

Residues 61–165 (AEVLEILTHT…GDKLNQVLAR (105 aa)) enclose the THUMP domain. Residues 183–184 (LI), Lys265, Gly287, and Gln296 each bind ATP. Cys344 and Cys456 are oxidised to a cystine. Positions 404–482 (VEEHAVVLDI…GFNNVKVYRP (79 aa)) constitute a Rhodanese domain. Residue Cys456 is the Cysteine persulfide intermediate of the active site.

Belongs to the ThiI family.

Its subcellular location is the cytoplasm. It catalyses the reaction [ThiI sulfur-carrier protein]-S-sulfanyl-L-cysteine + a uridine in tRNA + 2 reduced [2Fe-2S]-[ferredoxin] + ATP + H(+) = [ThiI sulfur-carrier protein]-L-cysteine + a 4-thiouridine in tRNA + 2 oxidized [2Fe-2S]-[ferredoxin] + AMP + diphosphate. The catalysed reaction is [ThiS sulfur-carrier protein]-C-terminal Gly-Gly-AMP + S-sulfanyl-L-cysteinyl-[cysteine desulfurase] + AH2 = [ThiS sulfur-carrier protein]-C-terminal-Gly-aminoethanethioate + L-cysteinyl-[cysteine desulfurase] + A + AMP + 2 H(+). Its pathway is cofactor biosynthesis; thiamine diphosphate biosynthesis. Functionally, catalyzes the ATP-dependent transfer of a sulfur to tRNA to produce 4-thiouridine in position 8 of tRNAs, which functions as a near-UV photosensor. Also catalyzes the transfer of sulfur to the sulfur carrier protein ThiS, forming ThiS-thiocarboxylate. This is a step in the synthesis of thiazole, in the thiamine biosynthesis pathway. The sulfur is donated as persulfide by IscS. The protein is tRNA sulfurtransferase of Vibrio parahaemolyticus serotype O3:K6 (strain RIMD 2210633).